A 114-amino-acid polypeptide reads, in one-letter code: Ribonuclease P protein component (114 aa).

The protein belongs to the RnpA family. Consists of a catalytic RNA component (M1 or rnpB) and a protein subunit.

The catalysed reaction is Endonucleolytic cleavage of RNA, removing 5'-extranucleotides from tRNA precursor.. Its function is as follows. RNaseP catalyzes the removal of the 5'-leader sequence from pre-tRNA to produce the mature 5'-terminus. It can also cleave other RNA substrates such as 4.5S RNA. The protein component plays an auxiliary but essential role in vivo by binding to the 5'-leader sequence and broadening the substrate specificity of the ribozyme. The chain is Ribonuclease P protein component from Legionella pneumophila (strain Lens).